Reading from the N-terminus, the 192-residue chain is Crossover junction endodeoxyribonuclease RuvC (192 aa).

Active-site residues include D8, E67, and D139. 3 residues coordinate Mg(2+): D8, E67, and D139.

It belongs to the RuvC family. Homodimer which binds Holliday junction (HJ) DNA. The HJ becomes 2-fold symmetrical on binding to RuvC with unstacked arms; it has a different conformation from HJ DNA in complex with RuvA. In the full resolvosome a probable DNA-RuvA(4)-RuvB(12)-RuvC(2) complex forms which resolves the HJ. Mg(2+) is required as a cofactor.

It localises to the cytoplasm. It carries out the reaction Endonucleolytic cleavage at a junction such as a reciprocal single-stranded crossover between two homologous DNA duplexes (Holliday junction).. The RuvA-RuvB-RuvC complex processes Holliday junction (HJ) DNA during genetic recombination and DNA repair. Endonuclease that resolves HJ intermediates. Cleaves cruciform DNA by making single-stranded nicks across the HJ at symmetrical positions within the homologous arms, yielding a 5'-phosphate and a 3'-hydroxyl group; requires a central core of homology in the junction. The consensus cleavage sequence is 5'-(A/T)TT(C/G)-3'. Cleavage occurs on the 3'-side of the TT dinucleotide at the point of strand exchange. HJ branch migration catalyzed by RuvA-RuvB allows RuvC to scan DNA until it finds its consensus sequence, where it cleaves and resolves the cruciform DNA. The sequence is that of Crossover junction endodeoxyribonuclease RuvC from Actinobacillus pleuropneumoniae serotype 5b (strain L20).